A 492-amino-acid chain; its full sequence is 3-octaprenyl-4-hydroxybenzoate carboxy-lyase (492 aa).

Residue Asn-172 participates in Mn(2+) binding. Residues 175–177, 189–191, and 194–195 contribute to the prenylated FMN site; these read IYR, RWL, and RG. Residue Glu-238 participates in Mn(2+) binding. The active-site Proton donor is the Asp-287.

This sequence belongs to the UbiD family. As to quaternary structure, homohexamer. Prenylated FMN serves as cofactor. Mn(2+) is required as a cofactor.

The protein localises to the cell membrane. It catalyses the reaction a 4-hydroxy-3-(all-trans-polyprenyl)benzoate + H(+) = a 2-(all-trans-polyprenyl)phenol + CO2. Its pathway is cofactor biosynthesis; ubiquinone biosynthesis. Its function is as follows. Catalyzes the decarboxylation of 3-octaprenyl-4-hydroxy benzoate to 2-octaprenylphenol, an intermediate step in ubiquinone biosynthesis. This is 3-octaprenyl-4-hydroxybenzoate carboxy-lyase from Pasteurella multocida (strain Pm70).